A 503-amino-acid chain; its full sequence is MRPVLVVDFGSQYSQLVVRAIRECGYYAEFASPSISAAECLALSPIAIFLSGGPASAYKDNAPKLDEEILNCGIPVFGICYGFQLLAQAFGGSVKKANAPEYGPADITIVNKAFFSGQPDRQTVWMSHGDSVIRAPKNFCILSTSQDAVLSFCNRDRTIAGVQWHPEVKHSRFGKHTIKAFLSSFAAPNWDPEQTICGTVDSIRKTVGCKRVLCALSGGVDSVVAATLTHRAIGDRLRCVFVDHGLLRLNEREQVEEYCSSLGLNVSTYDASDCFLSALSGIRDSEQKRKVIGREFIACFSKLQERFDIKPHFLLQGTLYPDLVESGATPGGATIKSHHNVGGLSDNLGFELLEPLKYLFKDEVRKIGLQLGIPKHIVHRQPFPGPGLAIRIIGEVTNKKLSILRAADAIVRHELRDWTDIWQCPVILLSDVQSVGVRGDSRSCGFPIVIRPVSSDDAMTADWYRLPYDVLARISGRITNEIPEIVRVVLDITPKPPATIEWE.

The Glutamine amidotransferase type-1 domain occupies 3–189; it reads PVLVVDFGSQ…AFLSSFAAPN (187 aa). C80 (nucleophile) is an active-site residue. Active-site residues include H165 and E167. Residues 190–380 form the GMPS ATP-PPase domain; the sequence is WDPEQTICGT…LGIPKHIVHR (191 aa). An ATP-binding site is contributed by 217–223; it reads SGGVDSV.

As to quaternary structure, homodimer.

The enzyme catalyses XMP + L-glutamine + ATP + H2O = GMP + L-glutamate + AMP + diphosphate + 2 H(+). It functions in the pathway purine metabolism; GMP biosynthesis; GMP from XMP (L-Gln route): step 1/1. In terms of biological role, catalyzes the synthesis of GMP from XMP. The chain is GMP synthase [glutamine-hydrolyzing] from Tropheryma whipplei (strain Twist) (Whipple's bacillus).